The sequence spans 86 residues: Small ribosomal subunit protein eS27 (86 aa).

Residues 39 to 61 form a C4-type zinc finger; the sequence is CQGCFNITTVFSHSQTVVVCPGC.

The protein belongs to the eukaryotic ribosomal protein eS27 family. The cofactor is Zn(2+).

The sequence is that of Small ribosomal subunit protein eS27 (RPS27) from Hordeum vulgare (Barley).